The chain runs to 388 residues: Phosphopentomutase (388 aa).

Mn(2+)-binding residues include D10, D282, H287, D323, H324, and H335.

Belongs to the phosphopentomutase family. Mn(2+) is required as a cofactor.

Its subcellular location is the cytoplasm. The catalysed reaction is 2-deoxy-alpha-D-ribose 1-phosphate = 2-deoxy-D-ribose 5-phosphate. It catalyses the reaction alpha-D-ribose 1-phosphate = D-ribose 5-phosphate. It functions in the pathway carbohydrate degradation; 2-deoxy-D-ribose 1-phosphate degradation; D-glyceraldehyde 3-phosphate and acetaldehyde from 2-deoxy-alpha-D-ribose 1-phosphate: step 1/2. Isomerase that catalyzes the conversion of deoxy-ribose 1-phosphate (dRib-1-P) and ribose 1-phosphate (Rib-1-P) to deoxy-ribose 5-phosphate (dRib-5-P) and ribose 5-phosphate (Rib-5-P), respectively. This chain is Phosphopentomutase, found in Desulfitobacterium hafniense (strain DSM 10664 / DCB-2).